The chain runs to 204 residues: ATP phosphoribosyltransferase (204 aa).

The protein belongs to the ATP phosphoribosyltransferase family. Short subfamily. Heteromultimer composed of HisG and HisZ subunits.

The protein resides in the cytoplasm. It catalyses the reaction 1-(5-phospho-beta-D-ribosyl)-ATP + diphosphate = 5-phospho-alpha-D-ribose 1-diphosphate + ATP. Its pathway is amino-acid biosynthesis; L-histidine biosynthesis; L-histidine from 5-phospho-alpha-D-ribose 1-diphosphate: step 1/9. Functionally, catalyzes the condensation of ATP and 5-phosphoribose 1-diphosphate to form N'-(5'-phosphoribosyl)-ATP (PR-ATP). Has a crucial role in the pathway because the rate of histidine biosynthesis seems to be controlled primarily by regulation of HisG enzymatic activity. The chain is ATP phosphoribosyltransferase from Campylobacter concisus (strain 13826).